We begin with the raw amino-acid sequence, 158 residues long: Cyclic pyranopterin monophosphate synthase (158 aa).

Substrate-binding positions include 76 to 78 (LCH) and 114 to 115 (ME). Residue aspartate 129 is part of the active site.

Belongs to the MoaC family. Homohexamer; trimer of dimers.

It carries out the reaction (8S)-3',8-cyclo-7,8-dihydroguanosine 5'-triphosphate = cyclic pyranopterin phosphate + diphosphate. It participates in cofactor biosynthesis; molybdopterin biosynthesis. Functionally, catalyzes the conversion of (8S)-3',8-cyclo-7,8-dihydroguanosine 5'-triphosphate to cyclic pyranopterin monophosphate (cPMP). The chain is Cyclic pyranopterin monophosphate synthase from Shewanella piezotolerans (strain WP3 / JCM 13877).